The chain runs to 433 residues: Enolase (433 aa).

Gln167 lines the (2R)-2-phosphoglycerate pocket. Glu209 acts as the Proton donor in catalysis. Residues Asp246, Glu291, and Asp318 each contribute to the Mg(2+) site. The (2R)-2-phosphoglycerate site is built by Lys343, Arg372, Ser373, and Lys394. The Proton acceptor role is filled by Lys343.

This sequence belongs to the enolase family. Component of the RNA degradosome, a multiprotein complex involved in RNA processing and mRNA degradation. The cofactor is Mg(2+).

Its subcellular location is the cytoplasm. The protein resides in the secreted. It localises to the cell surface. The catalysed reaction is (2R)-2-phosphoglycerate = phosphoenolpyruvate + H2O. Its pathway is carbohydrate degradation; glycolysis; pyruvate from D-glyceraldehyde 3-phosphate: step 4/5. Functionally, catalyzes the reversible conversion of 2-phosphoglycerate (2-PG) into phosphoenolpyruvate (PEP). It is essential for the degradation of carbohydrates via glycolysis. This chain is Enolase, found in Haemophilus ducreyi (strain 35000HP / ATCC 700724).